Here is a 173-residue protein sequence, read N- to C-terminus: Trafficking regulator of GLUT4 1 (173 aa).

Residues 1–17 are compositionally biased toward polar residues; the sequence is MANPVQPQLQDPGSTSP. The segment at 1 to 22 is disordered; that stretch reads MANPVQPQLQDPGSTSPLDLPE. Topologically, residues 1–102 are cytoplasmic; that stretch reads MANPVQPQLQ…QDQEAPKDYL (102 aa). Phosphoserine is present on residues serine 16, serine 43, serine 45, serine 70, serine 84, and serine 85. The helical intramembrane region spans 103–123; it reads VLAIASCFCPVWPLNLIPLIF. Over 124 to 150 the chain is Cytoplasmic; it reads SIMSRSSVQQGDLDGARRLGRLARLLS. A helical membrane pass occupies residues 151–171; that stretch reads ITFIILGIVIIIVAVTVNFTV. Over 172-173 the chain is Extracellular; the sequence is PK.

It belongs to the CD225/Dispanin family. As to quaternary structure, interacts with SLC2A4; the interaction is required for proper SLC2A4 reacycling after insulin stimulation. Present in adipose tissue and undetectable in other tissues (at protein level).

Its subcellular location is the cell membrane. It localises to the endomembrane system. The protein resides in the cytoplasm. It is found in the perinuclear region. In terms of biological role, regulates insulin-mediated adipose tissue glucose uptake and transport by modulation of SLC2A4 recycling. Not required for SLC2A4 membrane fusion upon an initial stimulus, but rather is necessary for proper protein recycling during prolonged insulin stimulation. In Rattus norvegicus (Rat), this protein is Trafficking regulator of GLUT4 1.